Consider the following 326-residue polypeptide: N-acetyl-gamma-glutamyl-phosphate reductase (326 aa).

Residue cysteine 155 is part of the active site.

This sequence belongs to the NAGSA dehydrogenase family. Type 1 subfamily.

It localises to the cytoplasm. It catalyses the reaction N-acetyl-L-glutamate 5-semialdehyde + phosphate + NADP(+) = N-acetyl-L-glutamyl 5-phosphate + NADPH + H(+). It functions in the pathway amino-acid biosynthesis; L-arginine biosynthesis; N(2)-acetyl-L-ornithine from L-glutamate: step 3/4. In terms of biological role, catalyzes the NADPH-dependent reduction of N-acetyl-5-glutamyl phosphate to yield N-acetyl-L-glutamate 5-semialdehyde. This is N-acetyl-gamma-glutamyl-phosphate reductase from Shewanella sp. (strain MR-4).